The following is a 317-amino-acid chain: Universal stress protein Mb2019 (317 aa).

ATP contacts are provided by residues G13, 128–134 (GYRGQGA), 142–143 (SV), G175, D208, 277–283 (GSHGRGG), and 291–293 (SVS).

The protein belongs to the universal stress protein A family.

This chain is Universal stress protein Mb2019, found in Mycobacterium bovis (strain ATCC BAA-935 / AF2122/97).